Reading from the N-terminus, the 129-residue chain is Large ribosomal subunit protein eL32 (129 aa).

This sequence belongs to the eukaryotic ribosomal protein eL32 family.

The sequence is that of Large ribosomal subunit protein eL32 (rpl32e) from Methanosarcina acetivorans (strain ATCC 35395 / DSM 2834 / JCM 12185 / C2A).